Consider the following 172-residue polypeptide: 3-hydroxydecanoyl-[acyl-carrier-protein] dehydratase (172 aa).

The active site involves His71.

The protein belongs to the thioester dehydratase family. FabA subfamily. Homodimer.

The protein resides in the cytoplasm. It catalyses the reaction a (3R)-hydroxyacyl-[ACP] = a (2E)-enoyl-[ACP] + H2O. The enzyme catalyses (3R)-hydroxydecanoyl-[ACP] = (2E)-decenoyl-[ACP] + H2O. The catalysed reaction is (2E)-decenoyl-[ACP] = (3Z)-decenoyl-[ACP]. It functions in the pathway lipid metabolism; fatty acid biosynthesis. Necessary for the introduction of cis unsaturation into fatty acids. Catalyzes the dehydration of (3R)-3-hydroxydecanoyl-ACP to E-(2)-decenoyl-ACP and then its isomerization to Z-(3)-decenoyl-ACP. Can catalyze the dehydratase reaction for beta-hydroxyacyl-ACPs with saturated chain lengths up to 16:0, being most active on intermediate chain length. In Blochmanniella pennsylvanica (strain BPEN), this protein is 3-hydroxydecanoyl-[acyl-carrier-protein] dehydratase.